The chain runs to 439 residues: Histidine--tRNA ligase (439 aa).

It belongs to the class-II aminoacyl-tRNA synthetase family. In terms of assembly, homodimer.

The protein resides in the cytoplasm. The catalysed reaction is tRNA(His) + L-histidine + ATP = L-histidyl-tRNA(His) + AMP + diphosphate + H(+). The chain is Histidine--tRNA ligase (hisS) from Leptospira interrogans serogroup Icterohaemorrhagiae serovar Lai (strain 56601).